We begin with the raw amino-acid sequence, 156 residues long: Arginine repressor (156 aa).

This sequence belongs to the ArgR family.

It is found in the cytoplasm. The protein operates within amino-acid biosynthesis; L-arginine biosynthesis [regulation]. Its function is as follows. Regulates arginine biosynthesis genes. This chain is Arginine repressor, found in Tolumonas auensis (strain DSM 9187 / NBRC 110442 / TA 4).